Consider the following 148-residue polypeptide: Sec-independent protein translocase protein TatB (148 aa).

Residues 2–22 (FNDIGPLELVTLVVLAVLVFG) traverse the membrane as a helical segment. Composition is skewed to basic and acidic residues over residues 100–110 (VTDAVHGRESE) and 128–148 (MTKKREQLEADERPPFDADAT). A disordered region spans residues 100–148 (VTDAVHGRESETSASSSSANGSAGGTVDMTKKREQLEADERPPFDADAT).

The protein belongs to the TatB family. The Tat system comprises two distinct complexes: a TatABC complex, containing multiple copies of TatA, TatB and TatC subunits, and a separate TatA complex, containing only TatA subunits. Substrates initially bind to the TatABC complex, which probably triggers association of the separate TatA complex to form the active translocon.

The protein localises to the cell membrane. Functionally, part of the twin-arginine translocation (Tat) system that transports large folded proteins containing a characteristic twin-arginine motif in their signal peptide across membranes. Together with TatC, TatB is part of a receptor directly interacting with Tat signal peptides. TatB may form an oligomeric binding site that transiently accommodates folded Tat precursor proteins before their translocation. This chain is Sec-independent protein translocase protein TatB, found in Streptomyces avermitilis (strain ATCC 31267 / DSM 46492 / JCM 5070 / NBRC 14893 / NCIMB 12804 / NRRL 8165 / MA-4680).